The sequence spans 444 residues: N-succinylarginine dihydrolase (444 aa).

Residues 19–28, Asn-110, and 137–138 each bind substrate; these read SGLSVGNIAS and HR. Glu-174 is a catalytic residue. Arg-214 serves as a coordination point for substrate. His-250 is an active-site residue. The substrate site is built by Asp-252 and Asn-362. The active-site Nucleophile is Cys-368.

It belongs to the succinylarginine dihydrolase family. In terms of assembly, homodimer.

The catalysed reaction is N(2)-succinyl-L-arginine + 2 H2O + 2 H(+) = N(2)-succinyl-L-ornithine + 2 NH4(+) + CO2. Its pathway is amino-acid degradation; L-arginine degradation via AST pathway; L-glutamate and succinate from L-arginine: step 2/5. In terms of biological role, catalyzes the hydrolysis of N(2)-succinylarginine into N(2)-succinylornithine, ammonia and CO(2). In Aliivibrio fischeri (strain ATCC 700601 / ES114) (Vibrio fischeri), this protein is N-succinylarginine dihydrolase.